Consider the following 386-residue polypeptide: SET and MYND domain-containing protein DDB_G0273589 (386 aa).

An SET domain is found at 6 to 294; it reads NGLELKSSEN…KGDQLTISYI (289 aa). The segment at 51 to 94 adopts an MYND-type zinc-finger fold; it reads CFNCIKQLPSVIKLSLKCNQCNEIWYCNEQCKNENINKHQHYEC. Residues 136–171 are a coiled coil; it reads NNKFIEQQLNNNNNNNNDNEQLTNTLDDVFDLVENQ.

Belongs to the class V-like SAM-binding methyltransferase superfamily.

In terms of biological role, probable methyltransferase. In Dictyostelium discoideum (Social amoeba), this protein is SET and MYND domain-containing protein DDB_G0273589.